We begin with the raw amino-acid sequence, 340 residues long: Glyceraldehyde-3-phosphate dehydrogenase, cytosolic (340 aa).

Residues 16-17, Asp38, and Arg85 each bind NAD(+); that span reads RI. Residues 156–158, Thr187, 216–217, and Arg239 each bind D-glyceraldehyde 3-phosphate; these read SCT and TG. Cys157 acts as the Nucleophile in catalysis. Position 321 (Asn321) interacts with NAD(+).

Belongs to the glyceraldehyde-3-phosphate dehydrogenase family. In terms of assembly, homotetramer.

It localises to the cytoplasm. It catalyses the reaction D-glyceraldehyde 3-phosphate + phosphate + NAD(+) = (2R)-3-phospho-glyceroyl phosphate + NADH + H(+). It functions in the pathway carbohydrate degradation; glycolysis; pyruvate from D-glyceraldehyde 3-phosphate: step 1/5. Its function is as follows. Key enzyme in glycolysis that catalyzes the first step of the pathway by converting D-glyceraldehyde 3-phosphate (G3P) into 3-phospho-D-glyceroyl phosphate. Essential for the maintenance of cellular ATP levels and carbohydrate metabolism. In Taxus baccata (English yew), this protein is Glyceraldehyde-3-phosphate dehydrogenase, cytosolic.